The chain runs to 350 residues: Transmembrane protein 185B (350 aa).

7 helical membrane passes run 16–36 (LIYTCLLLFSVLLPLRLDGII), 41–61 (WAVFAPIWLWKLLVVAGASVG), 81–101 (FKAMLIAVGIHLLLLMFEVLV), 111–131 (FWLLVFMPLFFVSPVSVAACV), 168–188 (WLVVFVPLWILMSFLCLVVLY), 211–231 (VTMAISWITIVVPLLTFEVLL), and 240–260 (TFSYVSIFVPLWLSLLTLMAT).

The protein belongs to the TMEM185 family.

The protein resides in the membrane. The chain is Transmembrane protein 185B (TMEM185B) from Homo sapiens (Human).